Consider the following 108-residue polypeptide: BH3-like motif-containing cell death inducer (108 aa).

Positions 5 to 12 match the BH3-like motif; sequence LPIEGQEI.

In terms of tissue distribution, ubiquitously expressed.

It is found in the cytoplasm. The protein resides in the mitochondrion. In terms of biological role, functions as a proapoptotic molecule through the caspase-dependent mitochondrial pathway of cell death. The sequence is that of BH3-like motif-containing cell death inducer (BLID) from Homo sapiens (Human).